Reading from the N-terminus, the 166-residue chain is NAD(P)H-quinone oxidoreductase subunit I, chloroplastic (166 aa).

4Fe-4S ferredoxin-type domains follow at residues 55–84 and 95–124; these read GRIH…VDWK and LNYS…MTEE. Positions 64, 67, 70, 74, 104, 107, 110, and 114 each coordinate [4Fe-4S] cluster.

Belongs to the complex I 23 kDa subunit family. As to quaternary structure, NDH is composed of at least 16 different subunits, 5 of which are encoded in the nucleus. Requires [4Fe-4S] cluster as cofactor.

The protein localises to the plastid. It localises to the chloroplast thylakoid membrane. It carries out the reaction a plastoquinone + NADH + (n+1) H(+)(in) = a plastoquinol + NAD(+) + n H(+)(out). The catalysed reaction is a plastoquinone + NADPH + (n+1) H(+)(in) = a plastoquinol + NADP(+) + n H(+)(out). NDH shuttles electrons from NAD(P)H:plastoquinone, via FMN and iron-sulfur (Fe-S) centers, to quinones in the photosynthetic chain and possibly in a chloroplast respiratory chain. The immediate electron acceptor for the enzyme in this species is believed to be plastoquinone. Couples the redox reaction to proton translocation, and thus conserves the redox energy in a proton gradient. The chain is NAD(P)H-quinone oxidoreductase subunit I, chloroplastic from Sigesbeckia blakei.